We begin with the raw amino-acid sequence, 287 residues long: MNTVASLFAILPYPQIDPIALSIGPVAIRWYGLAYVTGILIGWWLARRMIANLSLWPGNTTPITEKHLDDFLVWAAIGIVLGGRIGYILFYDLQPVLDNPLVALEIWRGGMSFHGGLTGATLAMIVFARRNGLPVWMLFDLVACVAPIGLFFGRIANFINGELWGRVSDVAWAMQFPTGGPFTRHPSQLYEAALEGLVLFVLLQVLARQFHALKTSGVISGVFICGYALARIFVEFFREPDEQLGYLVGGWLTMGMLLSLPMLALGLWAIWRARRAGRSQEPSGLKG.

Helical transmembrane passes span 26–46 (VAIR…WWLA), 71–91 (FLVW…ILFY), 106–126 (IWRG…AMIV), and 132–152 (GLPV…GLFF). Residue R154 participates in a 1,2-diacyl-sn-glycero-3-phospho-(1'-sn-glycerol) binding. The next 3 membrane-spanning stretches (helical) occupy residues 187–207 (SQLY…QVLA), 217–237 (GVIS…VEFF), and 251–271 (WLTM…WAIW).

Belongs to the Lgt family.

It is found in the cell inner membrane. It carries out the reaction L-cysteinyl-[prolipoprotein] + a 1,2-diacyl-sn-glycero-3-phospho-(1'-sn-glycerol) = an S-1,2-diacyl-sn-glyceryl-L-cysteinyl-[prolipoprotein] + sn-glycerol 1-phosphate + H(+). It participates in protein modification; lipoprotein biosynthesis (diacylglyceryl transfer). Functionally, catalyzes the transfer of the diacylglyceryl group from phosphatidylglycerol to the sulfhydryl group of the N-terminal cysteine of a prolipoprotein, the first step in the formation of mature lipoproteins. This chain is Phosphatidylglycerol--prolipoprotein diacylglyceryl transferase, found in Allorhizobium ampelinum (strain ATCC BAA-846 / DSM 112012 / S4) (Agrobacterium vitis (strain S4)).